We begin with the raw amino-acid sequence, 417 residues long: Serine hydroxymethyltransferase (417 aa).

Residues leucine 112 and glycine 116 to leucine 118 each bind (6S)-5,6,7,8-tetrahydrofolate. Lysine 221 bears the N6-(pyridoxal phosphate)lysine mark. Glutamate 247 is a binding site for (6S)-5,6,7,8-tetrahydrofolate.

The protein belongs to the SHMT family. Homodimer. Pyridoxal 5'-phosphate serves as cofactor.

Its subcellular location is the cytoplasm. The catalysed reaction is (6R)-5,10-methylene-5,6,7,8-tetrahydrofolate + glycine + H2O = (6S)-5,6,7,8-tetrahydrofolate + L-serine. Its pathway is one-carbon metabolism; tetrahydrofolate interconversion. The protein operates within amino-acid biosynthesis; glycine biosynthesis; glycine from L-serine: step 1/1. Its function is as follows. Catalyzes the reversible interconversion of serine and glycine with tetrahydrofolate (THF) serving as the one-carbon carrier. This reaction serves as the major source of one-carbon groups required for the biosynthesis of purines, thymidylate, methionine, and other important biomolecules. Also exhibits THF-independent aldolase activity toward beta-hydroxyamino acids, producing glycine and aldehydes, via a retro-aldol mechanism. The chain is Serine hydroxymethyltransferase from Borrelia recurrentis (strain A1).